Consider the following 159-residue polypeptide: Ecotin (159 aa).

The first 22 residues, 1–22 (MRPTPMTAILALTLAAAAPAMA), serve as a signal peptide directing secretion. Cys68 and Cys105 are oxidised to a cystine.

Belongs to the protease inhibitor I11 (ecotin) family. As to quaternary structure, homodimer.

It is found in the periplasm. In terms of biological role, general inhibitor of family S1 serine proteases. The protein is Ecotin of Pseudomonas putida (strain GB-1).